Here is a 309-residue protein sequence, read N- to C-terminus: Porphobilinogen deaminase (309 aa).

Position 242 is an S-(dipyrrolylmethanemethyl)cysteine (C242).

Belongs to the HMBS family. As to quaternary structure, monomer. Dipyrromethane is required as a cofactor.

It catalyses the reaction 4 porphobilinogen + H2O = hydroxymethylbilane + 4 NH4(+). It participates in porphyrin-containing compound metabolism; protoporphyrin-IX biosynthesis; coproporphyrinogen-III from 5-aminolevulinate: step 2/4. Tetrapolymerization of the monopyrrole PBG into the hydroxymethylbilane pre-uroporphyrinogen in several discrete steps. The protein is Porphobilinogen deaminase of Shewanella sediminis (strain HAW-EB3).